The chain runs to 2273 residues: Linear gramicidin synthase subunit A (2273 aa).

Positions 1–144 are GART; the sequence is MRILFLTTFM…AIEELFIREW (144 aa). 2 consecutive Carrier domains span residues 693-767 and 1724-1798; these read APTD…TEQK and APRT…TSEQ. Serine 728 and serine 1759 each carry O-(pantetheine 4'-phosphoryl)serine.

The protein belongs to the ATP-dependent AMP-binding enzyme family. As to quaternary structure, large multienzyme complex composed of 4 subunits; LgrA, LgrB, LgrC and LgrD. It depends on pantetheine 4'-phosphate as a cofactor.

Functionally, activates valine (or leucine, but much less frequently), and then glycine and catalyzes the formation of the peptide bond in the first step of peptide synthesis. This enzyme may also play a role in N-formylation of the first amino acid residue in the synthesized dipeptide. This Brevibacillus parabrevis protein is Linear gramicidin synthase subunit A (lgrA).